A 200-amino-acid polypeptide reads, in one-letter code: MGNFFLFAMTLVVCSVIVLLTGVADSAVICSEPTNLAEQYSQYMANATVSNMLEYLESSTAGGVASDEEEQLIYGNRICPSSIKAITTDPKSSVFERTTCPYFLVASHLSTRYPKIITEARCKCSGCVPLEENGHSDLTRCEPVYRPVRVLSRTGNCVNGVYQYAAAVHMKQEGCTCVRKTEALSGSGSGSNGSDDPIPM.

The N-terminal stretch at 1–26 is a signal peptide; the sequence is MGNFFLFAMTLVVCSVIVLLTGVADS. N46 carries an N-linked (GlcNAc...) asparagine glycan. 2 disulfide bridges follow: C122-C175 and C127-C177. An N-linked (GlcNAc...) asparagine glycan is attached at N192.

The protein belongs to the IL-17 family. As to expression, expressed in several tissues including hemocytes, gills, mantle, adductor muscle, labial palps, digestive glands and heart with highest levels in gills and lowest levels in adductor muscle and heart.

It is found in the secreted. The chain is Interleukin 17-like protein from Magallana gigas (Pacific oyster).